Reading from the N-terminus, the 466-residue chain is A-type ATP synthase subunit B (466 aa).

The protein belongs to the ATPase alpha/beta chains family. Has multiple subunits with at least A(3), B(3), C, D, E, F, H, I and proteolipid K(x).

It localises to the cell membrane. Its function is as follows. Component of the A-type ATP synthase that produces ATP from ADP in the presence of a proton gradient across the membrane. The B chain is a regulatory subunit. In Sulfolobus acidocaldarius (strain ATCC 33909 / DSM 639 / JCM 8929 / NBRC 15157 / NCIMB 11770), this protein is A-type ATP synthase subunit B.